We begin with the raw amino-acid sequence, 1070 residues long: DNA-directed RNA polymerase subunit beta (1070 aa).

This sequence belongs to the RNA polymerase beta chain family. In terms of assembly, in plastids the minimal PEP RNA polymerase catalytic core is composed of four subunits: alpha, beta, beta', and beta''. When a (nuclear-encoded) sigma factor is associated with the core the holoenzyme is formed, which can initiate transcription.

It localises to the plastid. Its subcellular location is the chloroplast. It catalyses the reaction RNA(n) + a ribonucleoside 5'-triphosphate = RNA(n+1) + diphosphate. Functionally, DNA-dependent RNA polymerase catalyzes the transcription of DNA into RNA using the four ribonucleoside triphosphates as substrates. The polypeptide is DNA-directed RNA polymerase subunit beta (Gossypium hirsutum (Upland cotton)).